A 437-amino-acid polypeptide reads, in one-letter code: Palmitoyltransferase PFA4 (437 aa).

Residues 1-12 (MAGLNDVPFIKG) lie on the Cytoplasmic side of the membrane. Residues 13–33 (LAVPSVCALIIFLGYASQFLF) traverse the membrane as a helical segment. Over 34 to 48 (NYSTTLEPGPPTRRE) the chain is Lumenal. The chain crosses the membrane as a helical span at residues 49 to 69 (TIIFNGLLLVLWITYYRTVAT). Topologically, residues 70 to 130 (DPGRYIFKDR…RNCVSMTTFP (61 aa)) are cytoplasmic. Residues 87–137 (RWCNKCAAPKPPRAHHCRHCARCVPRMDHHCPWTRNCVSMTTFPHFLRFLI) form the DHHC domain. Cysteine 117 serves as the catalytic S-palmitoyl cysteine intermediate. Residues 131–151 (HFLRFLIYTNMSLWMLGYFLW) form a helical membrane-spanning segment. At 152–173 (QRFSKIWEHRRLPAYLGPSFYG) the chain is on the lumenal side. Residues 174 to 194 (LICLSLISIVNFVTTVALGIM) form a helical membrane-spanning segment. Residues 195–437 (LINTVKSWVF…KILKKDGLDD (243 aa)) lie on the Cytoplasmic side of the membrane. A disordered region spans residues 377–419 (LDQGLGWVNSDGDRLRDYGVDEEASEPEGVNDDDDDDDDDDVP). Positions 396 to 419 (VDEEASEPEGVNDDDDDDDDDDVP) are enriched in acidic residues.

This sequence belongs to the DHHC palmitoyltransferase family. PFA4 subfamily.

Its subcellular location is the endoplasmic reticulum membrane. The catalysed reaction is L-cysteinyl-[protein] + hexadecanoyl-CoA = S-hexadecanoyl-L-cysteinyl-[protein] + CoA. Functionally, mediates the reversible addition of palmitate to target proteins, thereby regulating their membrane association and biological function. In Gibberella zeae (strain ATCC MYA-4620 / CBS 123657 / FGSC 9075 / NRRL 31084 / PH-1) (Wheat head blight fungus), this protein is Palmitoyltransferase PFA4.